The primary structure comprises 323 residues: Zinc finger C2HC domain-containing protein 1A (323 aa).

The C2HC/C3H-type 1 zinc finger occupies 7-36; it reads ELRPCKICGRTFFPATLKKHVPICQKTSVK. 4 residues coordinate Zn(2+): cysteine 11, cysteine 14, histidine 26, and cysteine 30. The tract at residues 35–75 is disordered; that stretch reads VKKRKTFESSRQRAEGTDINTVKPVKPRPEPPKKQSNWKRK. Over residues 40-50 the composition is skewed to basic and acidic residues; it reads TFESSRQRAEG. The C2HC/C3H-type 2 zinc finger occupies 110–139; sequence DYVQCPYCQRRFNQNAADRHINFCKEQSAR. 4 residues coordinate Zn(2+): cysteine 114, cysteine 117, histidine 129, and cysteine 133. Positions 138 to 273 are disordered; sequence ARMGQKIKGG…EAAMGYDSSD (136 aa). Polar residues predominate over residues 208–226; sequence KYQTQSPAHKNSTMVTSPQ.

This sequence belongs to the ZC2HC1 family. Requires Zn(2+) as cofactor.

The polypeptide is Zinc finger C2HC domain-containing protein 1A (zc2hc1a) (Xenopus laevis (African clawed frog)).